Reading from the N-terminus, the 114-residue chain is Monothiol glutaredoxin-S8 (114 aa).

One can recognise a Glutaredoxin domain in the interval 1 to 113 (MDRVTRLASQ…PLLRDAGALW (113 aa)). Cys21 contacts [2Fe-2S] cluster.

Belongs to the glutaredoxin family. CC-type subfamily.

Its subcellular location is the cytoplasm. Its function is as follows. May only reduce GSH-thiol disulfides, but not protein disulfides. This chain is Monothiol glutaredoxin-S8 (GRXS8), found in Oryza sativa subsp. japonica (Rice).